A 773-amino-acid polypeptide reads, in one-letter code: Carnitine O-palmitoyltransferase 1, liver isoform (773 aa).

At A2 the chain carries N-acetylalanine. At 2–47 the chain is on the cytoplasmic side; sequence AEAHQAVAFQFTVTPDGIDLRLSHEALRQIYLSGLHSWKKKFIRFK. A helical membrane pass occupies residues 48-73; sequence NGIITGVYPASPSSWLIVVVGVMTTM. Residues 74–102 lie on the Mitochondrial intermembrane side of the membrane; it reads YAKIDPSLGIIAKINRTLETANCMSSQTK. The chain crosses the membrane as a helical span at residues 103-122; it reads NVVSGVLFGTGLWVALIVTM. At 123-773 the chain is on the cytoplasmic side; sequence RYSLKVLLSY…LFGLSSNSKK (651 aa). Residue Y282 is modified to 3'-nitrotyrosine. Catalysis depends on H473, which acts as the Proton acceptor. CoA is bound at residue 555–567; sequence GKGIIKKCRTSPD. T588 carries the phosphothreonine modification. Residue Y589 is modified to 3'-nitrotyrosine. (R)-carnitine is bound by residues Y589 and T602. The residue at position 604 (T604) is a Phosphothreonine. S741 and S747 each carry phosphoserine.

It belongs to the carnitine/choline acetyltransferase family. In terms of assembly, homohexamer and homotrimer. Identified in a complex that contains at least CPT1A, ACSL1 and VDAC1. Also identified in complexes with ACSL1 and VDAC2 and VDAC3. Interacts with ZDHHC4. As to expression, strong expression in kidney and heart, and lower in liver and skeletal muscle.

It localises to the mitochondrion outer membrane. The enzyme catalyses (R)-carnitine + hexadecanoyl-CoA = O-hexadecanoyl-(R)-carnitine + CoA. The catalysed reaction is succinyl-CoA + L-lysyl-[protein] = N(6)-succinyl-L-lysyl-[protein] + CoA + H(+). It functions in the pathway lipid metabolism; fatty acid beta-oxidation. Inhibited by malonyl-CoA. Catalyzes the transfer of the acyl group of long-chain fatty acid-CoA conjugates onto carnitine, an essential step for the mitochondrial uptake of long-chain fatty acids and their subsequent beta-oxidation in the mitochondrion. Also possesses a lysine succinyltransferase activity that can regulate enzymatic activity of substrate proteins such as ENO1 and metabolism independent of its classical carnitine O-palmitoyltransferase activity. Plays an important role in hepatic triglyceride metabolism. Also plays a role in inducible regulatory T-cell (iTreg) differentiation once activated by butyryl-CoA that antagonizes malonyl-CoA-mediated CPT1A repression. Sustains the IFN-I response by recruiting ZDHCC4 to palmitoylate MAVS at the mitochondria leading to MAVS stabilization and activation. Promotes ROS-induced oxidative stress in liver injury via modulation of NFE2L2 and NLRP3-mediated signaling pathways. The polypeptide is Carnitine O-palmitoyltransferase 1, liver isoform (Homo sapiens (Human)).